Consider the following 525-residue polypeptide: Ribosomal protein S6 kinase beta-1 (525 aa).

The TOS motif motif lies at 28 to 32 (FDIDL). The tract at residues 28-54 (FDIDLDQPEDAGSEDELEEGGQLNESM) is disordered. Residues 30-46 (IDLDQPEDAGSEDELEE) show a composition bias toward acidic residues. The Protein kinase domain maps to 91 to 352 (FELLRVLGKG…AGEVQAHPFF (262 aa)). Residues 97-105 (LGKGGYGKV) and lysine 123 each bind ATP. Residue aspartate 218 is the Proton acceptor of the active site. At threonine 252 the chain carries Phosphothreonine; by PDPK1. An AGC-kinase C-terminal domain is found at 353–423 (RHINWEELLA…VAPSVLESVK (71 aa)). Residues 380–399 (SQFDSKFTRQTPVDSPDDST) are disordered. Positions 381-399 (QFDSKFTRQTPVDSPDDST) are enriched in polar residues. Phosphoserine is present on serine 394. Threonine 412 bears the Phosphothreonine; by MTOR, NEK6 and NEK7 mark. The interval 424 to 525 (EKFSFEPKIR…KRPEHLRMNL (102 aa)) is autoinhibitory domain. Residues serine 434 and serine 441 each carry the phosphoserine modification. Position 444 is a phosphothreonine (threonine 444). Phosphoserine occurs at positions 447 and 452. Residues 486–509 (VTTSGEASAPLPIRQPNSGPYKKQ) form a disordered region. The residue at position 516 (lysine 516) is an N6-acetyllysine.

Belongs to the protein kinase superfamily. AGC Ser/Thr protein kinase family. S6 kinase subfamily. As to quaternary structure, interacts with PPP1R9A/neurabin-1. Interacts with RPTOR. Interacts with IRS1. Interacts with EIF3B and EIF3C. Interacts with POLDIP3. Interacts with TRAF4. Interacts (via N-terminus) with IER5. Post-translationally, dephosphorylation by PPP1CC at Thr-412 in mitochondrion. Phosphorylation at Thr-412 is regulated by mTORC1. The phosphorylation at this site is maintained by an agonist-dependent autophosphorylation mechanism. Activated by phosphorylation at Thr-252 by PDPK1. In terms of tissue distribution, brain.

It localises to the cytoplasm. The protein resides in the synapse. The protein localises to the synaptosome. Its subcellular location is the mitochondrion outer membrane. It is found in the mitochondrion. The catalysed reaction is L-seryl-[protein] + ATP = O-phospho-L-seryl-[protein] + ADP + H(+). It carries out the reaction L-threonyl-[protein] + ATP = O-phospho-L-threonyl-[protein] + ADP + H(+). Its activity is regulated as follows. Activation requires multiple phosphorylation events on serine/threonine residues. Activation appears to be first mediated by phosphorylation of multiple sites in the autoinhibitory domain, which facilitates phosphorylation at Thr-412, disrupting the autoinhibitory mechanism and allowing phosphorylation of Thr-252 by PDPK1. The active conformation of the kinase is believed to be stabilized by a mechanism involving three conserved phosphorylation sites located in the kinase domain activation loop (Thr-252) and in the AGC-kinase C-terminal domain (Ser-394 in the middle of the tail/linker region and Thr-412 within a hydrophobic motif at its end). Activated by mTORC1; isoform Alpha I and isoform Alpha II are sensitive to rapamycin, which inhibits activating phosphorylation at Thr-412. Activated by PDPK1. Serine/threonine-protein kinase that acts downstream of mTOR signaling in response to growth factors and nutrients to promote cell proliferation, cell growth and cell cycle progression. Regulates protein synthesis through phosphorylation of EIF4B, RPS6 and EEF2K, and contributes to cell survival by repressing the pro-apoptotic function of BAD. Under conditions of nutrient depletion, the inactive form associates with the EIF3 translation initiation complex. Upon mitogenic stimulation, phosphorylation by the mechanistic target of rapamycin complex 1 (mTORC1) leads to dissociation from the EIF3 complex and activation. The active form then phosphorylates and activates several substrates in the pre-initiation complex, including the EIF2B complex and the cap-binding complex component EIF4B. Also controls translation initiation by phosphorylating a negative regulator of EIF4A, PDCD4, targeting it for ubiquitination and subsequent proteolysis. Promotes initiation of the pioneer round of protein synthesis by phosphorylating POLDIP3/SKAR. In response to IGF1, activates translation elongation by phosphorylating EEF2 kinase (EEF2K), which leads to its inhibition and thus activation of EEF2. Also plays a role in feedback regulation of mTORC2 by mTORC1 by phosphorylating MAPKAP1/SIN1, MTOR and RICTOR, resulting in the inhibition of mTORC2 and AKT1 signaling. Also involved in feedback regulation of mTORC1 and mTORC2 by phosphorylating DEPTOR. Mediates cell survival by phosphorylating the pro-apoptotic protein BAD and suppressing its pro-apoptotic function. Phosphorylates mitochondrial URI1 leading to dissociation of a URI1-PPP1CC complex. The free mitochondrial PPP1CC can then dephosphorylate RPS6KB1 at Thr-412, which is proposed to be a negative feedback mechanism for the RPS6KB1 anti-apoptotic function. Mediates TNF-alpha-induced insulin resistance by phosphorylating IRS1 at multiple serine residues, resulting in accelerated degradation of IRS1. In cells lacking functional TSC1-2 complex, constitutively phosphorylates and inhibits GSK3B. May be involved in cytoskeletal rearrangement through binding to neurabin. Phosphorylates and activates the pyrimidine biosynthesis enzyme CAD, downstream of MTOR. Following activation by mTORC1, phosphorylates EPRS and thereby plays a key role in fatty acid uptake by adipocytes and also most probably in interferon-gamma-induced translation inhibition. The chain is Ribosomal protein S6 kinase beta-1 (Rps6kb1) from Rattus norvegicus (Rat).